The primary structure comprises 427 residues: Acetyl-CoA acetyltransferase, mitochondrial (427 aa).

Residues 1 to 33 constitute a mitochondrion transit peptide; the sequence is MAVLAALLRSGARSRSPLLRRLVQEIRYVERSY. N6-acetyllysine; alternate is present on Lys-66. Lys-66 carries the post-translational modification N6-succinyllysine; alternate. Position 78 is an N6-succinyllysine (Lys-78). The active-site Acyl-thioester intermediate is the Cys-126. N6-acetyllysine; alternate is present on residues Lys-174, Lys-181, Lys-190, and Lys-202. Lys-174, Lys-181, Lys-190, and Lys-202 each carry N6-succinyllysine; alternate. Tyr-219 contacts CoA. Tyr-219 contributes to the K(+) binding site. N6-acetyllysine; alternate occurs at positions 223 and 230. An N6-succinyllysine; alternate mark is found at Lys-223 and Lys-230. At Lys-243 the chain carries N6-succinyllysine. 2 positions are modified to N6-acetyllysine: Lys-251 and Lys-257. CoA contacts are provided by residues 258–260 and Lys-263; that span reads RVD. The residue at position 263 (Lys-263) is an N6-acetyllysine; alternate. An N6-succinyllysine; alternate modification is found at Lys-263. N6-succinyllysine is present on residues Lys-266 and Lys-268. Residue Lys-273 is modified to N6-acetyllysine. Residues Ala-280, Ala-281, and Ala-283 each contribute to the K(+) site. Residue Ser-284 participates in CoA binding. Lys-338 is modified (N6-acetyllysine). Val-381 lines the K(+) pocket. Catalysis depends on Cys-413, which acts as the Proton donor/acceptor.

It belongs to the thiolase-like superfamily. Thiolase family. As to quaternary structure, homotetramer. In terms of processing, succinylation at Lys-268, adjacent to a coenzyme A binding site. Desuccinylated by SIRT5.

It is found in the mitochondrion. It carries out the reaction 2 acetyl-CoA = acetoacetyl-CoA + CoA. The enzyme catalyses propanoyl-CoA + acetyl-CoA = 2-methyl-3-oxobutanoyl-CoA + CoA. It functions in the pathway lipid metabolism; fatty acid beta-oxidation. With respect to regulation, activated by potassium ions, but not sodium ions. In terms of biological role, this is one of the enzymes that catalyzes the last step of the mitochondrial beta-oxidation pathway, an aerobic process breaking down fatty acids into acetyl-CoA. Using free coenzyme A/CoA, catalyzes the thiolytic cleavage of medium- to long-chain 3-oxoacyl-CoAs into acetyl-CoA and a fatty acyl-CoA shortened by two carbon atoms. The activity of the enzyme is reversible and it can also catalyze the condensation of two acetyl-CoA molecules into acetoacetyl-CoA. Thereby, it plays a major role in ketone body metabolism. This Homo sapiens (Human) protein is Acetyl-CoA acetyltransferase, mitochondrial (ACAT1).